A 331-amino-acid polypeptide reads, in one-letter code: WW domain-containing protein C2F3.14c (331 aa).

Positions 1–184 are disordered; the sequence is MSSSKDCKAT…TNENQAQPSI (184 aa). Residues 9–22 show a composition bias toward polar residues; it reads ATSNVDQTIPASNV. A compositionally biased stretch (low complexity) spans 23-41; it reads NSGDFISSNTSSSNSENSN. Positions 57-89 are enriched in polar residues; that stretch reads SFISENTPKNTFESTQTYENLESISKNEPTSEA. Residues 105-145 are compositionally biased toward pro residues; sequence REPPLPNEPVPEEPLPGEPPLPDEPVPEEPLPGEPPLPNEP. The segment covering 158–184 has biased composition (polar residues); it reads SDETVSETSKNDTSNSPTNENQAQPSI. In terms of domain architecture, WW spans 187–220; that stretch reads SEGHRIAAIWDPSQQAYYFWDTLTNTTSWNNPLE. Residues 290–309 form a disordered region; the sequence is YTRKEMEQMKRRTKEKKEMK. Residues 292-309 are compositionally biased toward basic and acidic residues; that stretch reads RKEMEQMKRRTKEKKEMK.

Its subcellular location is the nucleus. The polypeptide is WW domain-containing protein C2F3.14c (Schizosaccharomyces pombe (strain 972 / ATCC 24843) (Fission yeast)).